Consider the following 328-residue polypeptide: Biotin synthase (328 aa).

The Radical SAM core domain occupies 48–275 (NRIQLSKLLN…KSHVRLTAGR (228 aa)). [4Fe-4S] cluster is bound by residues Cys63, Cys67, and Cys70. Residues Cys107, Cys138, Cys198, and Arg270 each coordinate [2Fe-2S] cluster.

This sequence belongs to the radical SAM superfamily. Biotin synthase family. Homodimer. The cofactor is [4Fe-4S] cluster. Requires [2Fe-2S] cluster as cofactor.

The catalysed reaction is (4R,5S)-dethiobiotin + (sulfur carrier)-SH + 2 reduced [2Fe-2S]-[ferredoxin] + 2 S-adenosyl-L-methionine = (sulfur carrier)-H + biotin + 2 5'-deoxyadenosine + 2 L-methionine + 2 oxidized [2Fe-2S]-[ferredoxin]. The protein operates within cofactor biosynthesis; biotin biosynthesis; biotin from 7,8-diaminononanoate: step 2/2. Functionally, catalyzes the conversion of dethiobiotin (DTB) to biotin by the insertion of a sulfur atom into dethiobiotin via a radical-based mechanism. This Brucella abortus (strain S19) protein is Biotin synthase.